The chain runs to 127 residues: uncharacterized protein (127 aa).

2 helical membrane-spanning segments follow: residues 64-84 (GYYI…FGYL) and 101-118 (FFHF…AIYY).

Its subcellular location is the membrane. This is an uncharacterized protein from Saccharomyces cerevisiae (strain ATCC 204508 / S288c) (Baker's yeast).